A 216-amino-acid chain; its full sequence is Transmembrane protein 125 (216 aa).

Helical transmembrane passes span 32–52 (LLCF…GVAL), 65–85 (LAVG…QLMS), 111–131 (AVVV…LAGL), and 144–164 (MLSV…GLLL).

The protein resides in the membrane. The protein is Transmembrane protein 125 (Tmem125) of Mus musculus (Mouse).